The chain runs to 576 residues: 5'-nucleotidase (576 aa).

The N-terminal stretch at 1–28 (MRPAAATAPKWLLLALSALLPLWPTAKS) is a signal peptide. Residues Asp38 and His40 each contribute to the Zn(2+) site. Cys53 and Cys59 form a disulfide bridge. N-linked (GlcNAc...) asparagine glycosylation is present at Asn55. Positions 87, 119, 222, and 245 each coordinate Zn(2+). 3 N-linked (GlcNAc...) asparagine glycosylation sites follow: Asn313, Asn335, and Asn349. Intrachain disulfides connect Cys355–Cys360 and Cys367–Cys389. Arg356 serves as a coordination point for AMP. Residue Arg356 coordinates IMP. Asn392 and Arg397 together coordinate AMP. Residues Asn392 and Arg397 each coordinate IMP. N-linked (GlcNAc...) asparagine glycosylation occurs at Asn405. Phe419 is an AMP binding site. Phe419 contacts IMP. A disulfide bridge connects residues Cys478 and Cys481. Residues Tyr502 and Asp508 each coordinate AMP. IMP is bound by residues Tyr502 and Asp508. The GPI-anchor amidated serine moiety is linked to residue Ser551. A propeptide spans 552–576 (AASHYQGSFPLIILSFWAVILVLYQ) (removed in mature form).

This sequence belongs to the 5'-nucleotidase family. Homodimer. It depends on Zn(2+) as a cofactor. In terms of tissue distribution, expressed in the brain.

Its subcellular location is the cell membrane. It carries out the reaction a ribonucleoside 5'-phosphate + H2O = a ribonucleoside + phosphate. The enzyme catalyses a 2'-deoxyribonucleoside 5'-phosphate + H2O = a 2'-deoxyribonucleoside + phosphate. It catalyses the reaction dTMP + H2O = thymidine + phosphate. The catalysed reaction is CMP + H2O = cytidine + phosphate. It carries out the reaction IMP + H2O = inosine + phosphate. The enzyme catalyses AMP + H2O = adenosine + phosphate. It catalyses the reaction GMP + H2O = guanosine + phosphate. The catalysed reaction is UMP + H2O = uridine + phosphate. It carries out the reaction dAMP + H2O = 2'-deoxyadenosine + phosphate. The enzyme catalyses dCMP + H2O = 2'-deoxycytidine + phosphate. Its function is as follows. Catalyzes the hydrolysis of nucleotide monophosphates, releasing inorganic phosphate and the corresponding nucleoside. AMP is the preferred substrate but can also hydrolyze CMP and GMP. Shows a preference for ribonucleotide monophosphates over their equivalent deoxyribose forms. Other substrates include IMP, UMP, dAMP, dCMP, dTMP, NAD and NMN. The sequence is that of 5'-nucleotidase (Nt5e) from Rattus norvegicus (Rat).